A 508-amino-acid chain; its full sequence is PTS system mannitol-specific EIICB component (508 aa).

At 1–30 (MSQTETQENKGLGRKVQAFGSFLSSMIMPN) the chain is on the cytoplasmic side. One can recognise a PTS EIIC type-2 domain in the interval 19–351 (FGSFLSSMIM…LKFTKEPEED (333 aa)). Residues 31 to 52 (IGAFIAWGFIAAIFIDGGWWPN) traverse the membrane as a helical segment. At 53–56 (KDLS) the chain is on the extracellular side. The helical transmembrane segment at 57–77 (ELAGPMISYLIPLLIAYSGGR) threads the bilayer. Over 78–141 (LIHEMRGGII…QGFEMLFNNF (64 aa)) the chain is Cytoplasmic. Residues 142–163 (SAGILGFIMTIVGFKILAPIME) traverse the membrane as a helical segment. Topologically, residues 164-172 (FIMHILSLA) are extracellular. A helical membrane pass occupies residues 173–193 (VEALVHAHLLPLVSIIVEPAK). The Cytoplasmic segment spans residues 194–280 (IVFLNNAINH…VLMRPLLFIA (87 aa)). Residues 281-300 (VILGGMTGVATYSLLDFGFK) form a helical membrane-spanning segment. Topologically, residues 301–320 (SPASPGSFIVYMLNAPKGEF) are extracellular. A helical transmembrane segment spans residues 321 to 342 (LHMVLGVLLAAIVSFIVAALIL). Residues 343 to 508 (KFTKEPEEDL…RYDELLENLK (166 aa)) lie on the Cytoplasmic side of the membrane. Residues 355 to 400 (ATEKMEASKGKKSSVSSKLKGNEDNNATSTTASTSTSENNEEQSEE) are disordered. Over residues 367 to 392 (SSVSSKLKGNEDNNATSTTASTSTSE) the composition is skewed to low complexity. The PTS EIIB type-2 domain occupies 420-508 (NHVIFACDAG…RYDELLENLK (89 aa)). Cys-426 functions as the Phosphocysteine intermediate; for EIIB activity in the catalytic mechanism. Cys-426 is modified (phosphocysteine; by EIIA).

Homodimer.

Its subcellular location is the cell membrane. The catalysed reaction is D-mannitol(out) + N(pros)-phospho-L-histidyl-[protein] = D-mannitol 1-phosphate(in) + L-histidyl-[protein]. The phosphoenolpyruvate-dependent sugar phosphotransferase system (sugar PTS), a major carbohydrate active transport system, catalyzes the phosphorylation of incoming sugar substrates concomitantly with their translocation across the cell membrane. The enzyme II CmtAB PTS system is involved in D-mannitol transport. This chain is PTS system mannitol-specific EIICB component (mtlA), found in Staphylococcus saprophyticus subsp. saprophyticus (strain ATCC 15305 / DSM 20229 / NCIMB 8711 / NCTC 7292 / S-41).